A 344-amino-acid chain; its full sequence is Cytochrome c biogenesis protein CcsA (344 aa).

8 helical membrane-spanning segments follow: residues 21–41 (NVAFAVCLGAMLFYWGGAAFP), 45–65 (LLSELGLAGMIGANLTIAALL), 80–100 (LYESLFFLAWGITALHLLALH), 106–126 (WVGVTTAPLATGVVAFAALAL), 151–171 (VMLLAYAALLVGSLLAIAFLI), 252–272 (LIGLGFPLLTIGIIAGAVWAN), 287–307 (WALITWLVFAAYLHARITKGW), and 313–333 (ALLASLGFGVVWVCYLGVNFL).

Belongs to the CcmF/CycK/Ccl1/NrfE/CcsA family. May interact with ccs1.

It is found in the cellular thylakoid membrane. Its function is as follows. Required during biogenesis of c-type cytochromes (cytochrome c6 and cytochrome f) at the step of heme attachment. In Synechococcus sp. (strain JA-3-3Ab) (Cyanobacteria bacterium Yellowstone A-Prime), this protein is Cytochrome c biogenesis protein CcsA.